The sequence spans 72 residues: uncharacterized protein (72 aa).

The chain crosses the membrane as a helical span at residues 41–58; that stretch reads FSFLVHIMCGLTLTSYVI.

The protein resides in the membrane. This is an uncharacterized protein from Dictyostelium discoideum (Social amoeba).